The sequence spans 85 residues: UPF0386 protein Atu1321 (85 aa).

Belongs to the UPF0386 family.

This Agrobacterium fabrum (strain C58 / ATCC 33970) (Agrobacterium tumefaciens (strain C58)) protein is UPF0386 protein Atu1321.